Reading from the N-terminus, the 508-residue chain is Photosystem II CP47 reaction center protein (508 aa).

Transmembrane regions (helical) follow at residues 21–36, 101–115, 140–156, 203–218, 237–252, and 457–472; these read AVHIMHTALVSGWAGS, IVFSGLCFLAAIWHW, GIHLFLAGVACFGFGAF, IAAGTLGILAGLFHLS, VLSSSIAAVFFAAFVV, and TFALLFFFGHIWHGAR.

Belongs to the PsbB/PsbC family. PsbB subfamily. PSII is composed of 1 copy each of membrane proteins PsbA, PsbB, PsbC, PsbD, PsbE, PsbF, PsbH, PsbI, PsbJ, PsbK, PsbL, PsbM, PsbT, PsbX, PsbY, PsbZ, Psb30/Ycf12, at least 3 peripheral proteins of the oxygen-evolving complex and a large number of cofactors. It forms dimeric complexes. It depends on Binds multiple chlorophylls. PSII binds additional chlorophylls, carotenoids and specific lipids. as a cofactor.

It is found in the plastid. The protein resides in the chloroplast thylakoid membrane. Functionally, one of the components of the core complex of photosystem II (PSII). It binds chlorophyll and helps catalyze the primary light-induced photochemical processes of PSII. PSII is a light-driven water:plastoquinone oxidoreductase, using light energy to abstract electrons from H(2)O, generating O(2) and a proton gradient subsequently used for ATP formation. The chain is Photosystem II CP47 reaction center protein from Triticum aestivum (Wheat).